The following is a 90-amino-acid chain: Progonadoliberin-3 (90 aa).

Positions 1–23 (MEANSRVMVRVLLLALVVQVTLS) are cleaved as a signal peptide. Gln24 bears the Pyrrolidone carboxylic acid mark. Gly33 is subject to Glycine amide. The segment at 56 to 90 (LPEEASAQTQERLRPYNVINDDSSHFDRKKRSPNK) is disordered.

The protein belongs to the GnRH family.

Its subcellular location is the secreted. In terms of biological role, stimulates the secretion of gonadotropins. This is Progonadoliberin-3 (gnrh3) from Dicentrarchus labrax (European seabass).